Here is a 108-residue protein sequence, read N- to C-terminus: Evasin P1229 (108 aa).

Positions 1–31 (MEVRTFAFLQIVVFVALGIQLFAAVTDAADA) are cleaved as a signal peptide. Disulfide bonds link cysteine 41-cysteine 63, cysteine 45-cysteine 65, and cysteine 56-cysteine 76. Residue asparagine 44 is glycosylated (N-linked (GlcNAc...) asparagine). Positions 88-108 (GDPNNSDLDAATPRHPDASSR) are disordered. Asparagine 91 carries N-linked (GlcNAc...) asparagine glycosylation. The span at 99 to 108 (TPRHPDASSR) shows a compositional bias: basic and acidic residues.

The protein resides in the secreted. In terms of biological role, salivary chemokine-binding protein which binds to host chemokines CXCL1 and CXCL8. The chain is Evasin P1229 from Ixodes ricinus (Common tick).